We begin with the raw amino-acid sequence, 675 residues long: Mitochondrial distribution and morphology protein 12 (675 aa).

Residues methionine 1 to valine 675 enclose the SMP-LTD domain. Disordered stretches follow at residues leucine 66–histidine 186, glycine 241–glycine 270, glycine 307–threonine 327, threonine 365–alanine 390, and proline 444–glutamate 517. The segment covering serine 78–valine 101 has biased composition (acidic residues). Residues asparagine 123–glycine 137 show a composition bias toward low complexity. Residues glycine 261–glycine 270 show a composition bias toward gly residues. Residues proline 317–threonine 327 show a composition bias toward low complexity. 2 stretches are compositionally biased toward polar residues: residues proline 373–glycine 382 and valine 454–alanine 469. Positions glutamate 497 to glutamate 510 are enriched in acidic residues.

Belongs to the MDM12 family. As to quaternary structure, component of the ER-mitochondria encounter structure (ERMES) or MDM complex, composed of mmm-1, mdm10, mdm12 and mdm34. A mmm-1 homodimer associates with one molecule of mdm12 on each side in a pairwise head-to-tail manner, and the SMP-LTD domains of mmm-1 and mdm12 generate a continuous hydrophobic tunnel for phospholipid trafficking.

The protein resides in the mitochondrion outer membrane. It is found in the endoplasmic reticulum membrane. Component of the ERMES/MDM complex, which serves as a molecular tether to connect the endoplasmic reticulum (ER) and mitochondria. Components of this complex are involved in the control of mitochondrial shape and protein biogenesis, and function in nonvesicular lipid trafficking between the ER and mitochondria. Mdm12 is required for the interaction of the ER-resident membrane protein MMM1 and the outer mitochondrial membrane-resident beta-barrel protein mdm10. The mdm12-mmm-1 subcomplex functions in the major beta-barrel assembly pathway that is responsible for biogenesis of all mitochondrial outer membrane beta-barrel proteins, and acts in a late step after the SAM complex. The mdm10-mdm12-mmm-1 subcomplex further acts in the TOM40-specific pathway after the action of the mdm12-mmm1 complex. Essential for establishing and maintaining the structure of mitochondria and maintenance of mtDNA nucleoids. The chain is Mitochondrial distribution and morphology protein 12 from Neurospora crassa (strain ATCC 24698 / 74-OR23-1A / CBS 708.71 / DSM 1257 / FGSC 987).